The sequence spans 109 residues: Spermidine export protein MdtI (109 aa).

The next 4 membrane-spanning stretches (helical) occupy residues 6 to 26 (WIHG…NVLL), 36 to 56 (CYGI…SQAV), 64 to 84 (AYAL…WVLF), and 88 to 108 (LNPK…MIKF).

It belongs to the drug/metabolite transporter (DMT) superfamily. Small multidrug resistance (SMR) (TC 2.A.7.1) family. MdtI subfamily. Forms a complex with MdtJ.

The protein localises to the cell inner membrane. In terms of biological role, catalyzes the excretion of spermidine. This Salmonella paratyphi A (strain ATCC 9150 / SARB42) protein is Spermidine export protein MdtI.